A 380-amino-acid chain; its full sequence is Alcohol dehydrogenase 1 (380 aa).

Cys-48, Thr-50, His-70, Cys-100, Cys-103, Cys-106, Cys-114, and Cys-178 together coordinate Zn(2+). Thr-50 and His-70 together coordinate an alcohol. Thr-50 provides a ligand contact to NAD(+). NAD(+) is bound by residues 203-208, Asp-227, Arg-232, Thr-273, Val-296, 296-298, and Arg-373; these read GLGAVG and VGV.

It belongs to the zinc-containing alcohol dehydrogenase family. As to quaternary structure, homodimer. It depends on Zn(2+) as a cofactor.

It is found in the cytoplasm. The enzyme catalyses a primary alcohol + NAD(+) = an aldehyde + NADH + H(+). It catalyses the reaction a secondary alcohol + NAD(+) = a ketone + NADH + H(+). The protein is Alcohol dehydrogenase 1 of Pisum sativum (Garden pea).